The primary structure comprises 555 residues: CTP synthase (555 aa).

The amidoligase domain stretch occupies residues 1 to 267 (MPKFVFVTGG…CKEVLEFLDL (267 aa)). CTP is bound at residue S13. S13 contacts UTP. Residues 14–19 (SIGKGI) and D71 each bind ATP. The Mg(2+) site is built by D71 and E141. Residues 148 to 150 (DIE), 188 to 193 (KTKPTQ), and K224 each bind CTP. UTP contacts are provided by residues 188–193 (KTKPTQ) and K224. The region spanning 292–534 (KVAVVGKYVQ…IAAAQSRLPR (243 aa)) is the Glutamine amidotransferase type-1 domain. G354 is a binding site for L-glutamine. Residue C381 is the Nucleophile; for glutamine hydrolysis of the active site. L-glutamine is bound by residues 382–385 (LGMQ), E405, and R462. Residues H507 and E509 contribute to the active site. The tract at residues 532–555 (LPRSPQEALKQTQINSPNQSKNNP) is disordered. Residues 540–555 (LKQTQINSPNQSKNNP) are compositionally biased toward polar residues.

It belongs to the CTP synthase family. In terms of assembly, homotetramer.

It carries out the reaction UTP + L-glutamine + ATP + H2O = CTP + L-glutamate + ADP + phosphate + 2 H(+). The enzyme catalyses L-glutamine + H2O = L-glutamate + NH4(+). The catalysed reaction is UTP + NH4(+) + ATP = CTP + ADP + phosphate + 2 H(+). It functions in the pathway pyrimidine metabolism; CTP biosynthesis via de novo pathway; CTP from UDP: step 2/2. With respect to regulation, allosterically activated by GTP, when glutamine is the substrate; GTP has no effect on the reaction when ammonia is the substrate. The allosteric effector GTP functions by stabilizing the protein conformation that binds the tetrahedral intermediate(s) formed during glutamine hydrolysis. Inhibited by the product CTP, via allosteric rather than competitive inhibition. Catalyzes the ATP-dependent amination of UTP to CTP with either L-glutamine or ammonia as the source of nitrogen. Regulates intracellular CTP levels through interactions with the four ribonucleotide triphosphates. The chain is CTP synthase from Prochlorococcus marinus (strain MIT 9211).